We begin with the raw amino-acid sequence, 115 residues long: Large ribosomal subunit protein uL22 (115 aa).

Belongs to the universal ribosomal protein uL22 family. Part of the 50S ribosomal subunit.

In terms of biological role, this protein binds specifically to 23S rRNA; its binding is stimulated by other ribosomal proteins, e.g. L4, L17, and L20. It is important during the early stages of 50S assembly. It makes multiple contacts with different domains of the 23S rRNA in the assembled 50S subunit and ribosome. The globular domain of the protein is located near the polypeptide exit tunnel on the outside of the subunit, while an extended beta-hairpin is found that lines the wall of the exit tunnel in the center of the 70S ribosome. This is Large ribosomal subunit protein uL22 from Limosilactobacillus reuteri subsp. reuteri (strain JCM 1112) (Lactobacillus reuteri).